We begin with the raw amino-acid sequence, 302 residues long: Glutaminase (302 aa).

Substrate-binding residues include Ser61, Asn111, Glu155, Asn162, Tyr186, Tyr238, and Val256.

Belongs to the glutaminase family. Homotetramer.

The catalysed reaction is L-glutamine + H2O = L-glutamate + NH4(+). This is Glutaminase from Pseudomonas aeruginosa (strain LESB58).